The following is a 360-amino-acid chain: 3-dehydroquinate synthase (360 aa).

Residues 70–75 (DGESLK), 128–129 (TT), lysine 141, and lysine 150 each bind NAD(+). Glutamate 182, histidine 243, and histidine 259 together coordinate Zn(2+).

This sequence belongs to the sugar phosphate cyclases superfamily. Dehydroquinate synthase family. The cofactor is NAD(+). Co(2+) serves as cofactor. Requires Zn(2+) as cofactor.

It is found in the cytoplasm. It catalyses the reaction 7-phospho-2-dehydro-3-deoxy-D-arabino-heptonate = 3-dehydroquinate + phosphate. It functions in the pathway metabolic intermediate biosynthesis; chorismate biosynthesis; chorismate from D-erythrose 4-phosphate and phosphoenolpyruvate: step 2/7. Its function is as follows. Catalyzes the conversion of 3-deoxy-D-arabino-heptulosonate 7-phosphate (DAHP) to dehydroquinate (DHQ). In Thermoplasma volcanium (strain ATCC 51530 / DSM 4299 / JCM 9571 / NBRC 15438 / GSS1), this protein is 3-dehydroquinate synthase.